An 846-amino-acid polypeptide reads, in one-letter code: Outer membrane channel protein CpnT (846 aa).

The NTD stretch occupies residues 1-443; that stretch reads MAPLAVDPAA…AGVRGLKERL (443 aa). Residues 442–630 are disordered; that stretch reads RLEPTTPHLE…SGSEPPGLHA (189 aa). Composition is skewed to pro residues over residues 450–466 and 475–504; these read LEPPATPPRPGPQPPRI and APAPAAKPAPVPANGPLPHSPTESKPPPVD. Composition is skewed to low complexity over residues 508–517 and 562–586; these read EPVAPSSASA and APATAHQPQWATTPAAPAAAPHSTP. The tract at residues 651-846 is TNT; sequence RLSDEAVDPQ…ELIRRGVLRQ (196 aa). The 96-residue stretch at 751–846 folds into the TNT domain; that stretch reads YGPQLDRIGG…ELIRRGVLRQ (96 aa). The active site involves Arg757. Arg780 lines the NAD(+) pocket. Gln822 is an active-site residue.

As to quaternary structure, interacts with the immunity factor for TNT (IFT) homolog. Post-translationally, the C-terminal domain (TNT) is probably cleaved.

It localises to the cell outer membrane. Its subcellular location is the secreted. The protein resides in the cell surface. The catalysed reaction is NAD(+) + H2O = ADP-D-ribose + nicotinamide + H(+). Glycohydrolase activity is completely inhibited by interaction with the immunity factor for TNT (IFT) homolog. This inhibition protects M.bovis from self-poisoning. In terms of biological role, the N-terminal domain (NTD) forms an outer membrane channel and is used for uptake of nutrients across the outer membrane. Also confers susceptibility to structurally different antibiotics and antituberculosis drugs, and to toxic immune factors such as nitric oxide (NO). The C-terminal domain (TNT) is dispensable for normal growth in macrophages. This is Outer membrane channel protein CpnT from Mycobacterium bovis (strain BCG / Pasteur 1173P2).